We begin with the raw amino-acid sequence, 160 residues long: Regulatory protein RecX (160 aa).

This sequence belongs to the RecX family.

It is found in the cytoplasm. In terms of biological role, modulates RecA activity. This Pelodictyon phaeoclathratiforme (strain DSM 5477 / BU-1) protein is Regulatory protein RecX.